We begin with the raw amino-acid sequence, 122 residues long: Large ribosomal subunit protein uL14 (122 aa).

The protein belongs to the universal ribosomal protein uL14 family. Part of the 50S ribosomal subunit. Forms a cluster with proteins L3 and L19. In the 70S ribosome, L14 and L19 interact and together make contacts with the 16S rRNA in bridges B5 and B8.

In terms of biological role, binds to 23S rRNA. Forms part of two intersubunit bridges in the 70S ribosome. In Limosilactobacillus fermentum (strain NBRC 3956 / LMG 18251) (Lactobacillus fermentum), this protein is Large ribosomal subunit protein uL14.